The chain runs to 241 residues: Uridylate kinase (241 aa).

Residue 14–17 (KLSG) participates in ATP binding. The interval 22–27 (GNQGFG) is involved in allosteric activation by GTP. Glycine 56 is a binding site for UMP. Residues glycine 57 and arginine 61 each coordinate ATP. UMP is bound by residues aspartate 76 and 137–144 (TGNPYFTT). Threonine 164, tyrosine 170, and aspartate 173 together coordinate ATP.

Belongs to the UMP kinase family. Homohexamer.

Its subcellular location is the cytoplasm. The enzyme catalyses UMP + ATP = UDP + ADP. The protein operates within pyrimidine metabolism; CTP biosynthesis via de novo pathway; UDP from UMP (UMPK route): step 1/1. With respect to regulation, allosterically activated by GTP. Inhibited by UTP. Its function is as follows. Catalyzes the reversible phosphorylation of UMP to UDP. This chain is Uridylate kinase, found in Syntrophotalea carbinolica (strain DSM 2380 / NBRC 103641 / GraBd1) (Pelobacter carbinolicus).